Reading from the N-terminus, the 201-residue chain is UPF0301 protein BP0319 (201 aa).

This sequence belongs to the UPF0301 (AlgH) family.

This chain is UPF0301 protein BP0319, found in Bordetella pertussis (strain Tohama I / ATCC BAA-589 / NCTC 13251).